Reading from the N-terminus, the 591-residue chain is MATVPKSNMGPTKAVPTPFGCIGCKLPKPDYPPALIIFMFCAMVITVVVDLIGNSMVILAVTKNKKLRNSGNIFVASLSVADMLVAIYPYPLMLYAMSVGGWDLSQLQCQMVGLVTGLSVVGSIFNITAIAINRYCYICHSLQYKRIFSLRNTCIYLVVTWVMTVLAVLPNMYIGTIEYDPRTYTCIFNYVNNPAFTVTIVCIHFVLPLIIVGYCYTKIWIKVLAARDPAGQNPDNQFAEVRNFLTMFVIFLLFAVCWCPVNVLTVLVAVIPKEMAGKIPNWLYLAAYCIAYFNSCLNAIIYGILNESFRREYWTIFHAMRHPILFISHLISDIRETWETRALTRARVRARDQVREQERARACVAVEGTPRNVRNVLLPGDASAPHSDRASVRPKPQTRSTSVYRKPASIHHKSISGHPKSASVYPKPASSVHCKPASVHFKPASVHFKGDSVYFKGDTVHYRAASKLVTSHRISAGPSTSHPTSMAGYIKSGTSHPATTTVDYLEPATTSHSVLTAVDLPEVSASHCLEMTSTGHLRADISASVLPSVPFELAATPPDTTAIPIASGDYRKVVLIDDDSDDSDCSDEMAV.

Residues 1–38 (MATVPKSNMGPTKAVPTPFGCIGCKLPKPDYPPALIIF) lie on the Extracellular side of the membrane. Residues 39 to 59 (MFCAMVITVVVDLIGNSMVIL) traverse the membrane as a helical segment. The Cytoplasmic segment spans residues 60 to 72 (AVTKNKKLRNSGN). Residues 73-93 (IFVASLSVADMLVAIYPYPLM) form a helical membrane-spanning segment. Residues 94–111 (LYAMSVGGWDLSQLQCQM) lie on the Extracellular side of the membrane. A disulfide bridge connects residues Cys-109 and Cys-186. The helical transmembrane segment at 112-132 (VGLVTGLSVVGSIFNITAIAI) threads the bilayer. Residues 133–151 (NRYCYICHSLQYKRIFSLR) are Cytoplasmic-facing. A helical membrane pass occupies residues 152–172 (NTCIYLVVTWVMTVLAVLPNM). Over 173–196 (YIGTIEYDPRTYTCIFNYVNNPAF) the chain is Extracellular. A helical transmembrane segment spans residues 197 to 217 (TVTIVCIHFVLPLIIVGYCYT). Topologically, residues 218–247 (KIWIKVLAARDPAGQNPDNQFAEVRNFLTM) are cytoplasmic. The helical transmembrane segment at 248 to 268 (FVIFLLFAVCWCPVNVLTVLV) threads the bilayer. Over 269-281 (AVIPKEMAGKIPN) the chain is Extracellular. A helical transmembrane segment spans residues 282-302 (WLYLAAYCIAYFNSCLNAIIY). At 303-591 (GILNESFRRE…DSDCSDEMAV (289 aa)) the chain is on the cytoplasmic side. A disordered region spans residues 378–427 (LPGDASAPHSDRASVRPKPQTRSTSVYRKPASIHHKSISGHPKSASVYPK).

Belongs to the G-protein coupled receptor 1 family. As to quaternary structure, homodimer, and heterodimer with MTNR1A and MTNR1B. Interacts with KAT5. Interacts with RTN4 isoform A/NOGO-A. Interacts with TGFBR1. As to expression, strongly expressed in the brain with highly restricted pattern of expression, confined to a subset of the ependymal cells of the third ventricle and a population of cells in the dorsomedial hypothalamic nucleus.

The protein localises to the cell membrane. It is found in the postsynaptic density. G protein-coupled receptor that plays a role in numerous physiological processes including regulation of energy metabolism, neurite outgrowth or cell migration. Promotes self-renewal and neuronal differentiation of neural progenitor cells through activation of the NOTCH and WNT/beta-catenin signaling pathways. Modulates the KAT5-dependent glucocorticoid receptor signaling by modulating KAT5 subcellular compartmentalisation. Also plays a role in the activation TGFBR1 in the absence of TGFBR2 by interfering with FKBP1A binding to TGFBR1, leading to induction of both canonical and non-canonical SMAD signaling pathways resulting in inhibition of proliferation or promotion of migration. The polypeptide is Melatonin-related receptor (Gpr50) (Mus musculus (Mouse)).